The primary structure comprises 370 residues: 3-hydroxy-3-methylglutaryl-CoA lyase, cytoplasmic (370 aa).

G2 is lipidated: N-myristoyl glycine. A Pyruvate carboxyltransferase domain is found at 78-345 (VKIVEVGPRD…NTGVNLYKVM (268 aa)). R86 is a substrate binding site. D87, H278, and H280 together coordinate a divalent metal cation. C311 is an active-site residue. An a divalent metal cation-binding site is contributed by N320.

It belongs to the HMG-CoA lyase family. The cofactor is a divalent metal cation.

The protein resides in the cytoplasm. Its subcellular location is the cytosol. It localises to the endoplasmic reticulum membrane. The enzyme catalyses (3S)-3-hydroxy-3-methylglutaryl-CoA = acetoacetate + acetyl-CoA. Its pathway is metabolic intermediate metabolism; (S)-3-hydroxy-3-methylglutaryl-CoA degradation; acetoacetate from (S)-3-hydroxy-3-methylglutaryl-CoA: step 1/1. Its function is as follows. Non-mitochondrial 3-hydroxy-3-methylglutaryl-CoA lyase that catalyzes a cation-dependent cleavage of (S)-3-hydroxy-3-methylglutaryl-CoA into acetyl-CoA and acetoacetate, a key step in ketogenesis, the products of which support energy production in nonhepatic animal tissues. The sequence is that of 3-hydroxy-3-methylglutaryl-CoA lyase, cytoplasmic (HMGCLL1) from Homo sapiens (Human).